The following is a 157-amino-acid chain: SsrA-binding protein (157 aa).

The disordered stretch occupies residues 133-157; it reads HDKRNSIKEREGKREVERALKSRSR.

Belongs to the SmpB family.

The protein localises to the cytoplasm. Functionally, required for rescue of stalled ribosomes mediated by trans-translation. Binds to transfer-messenger RNA (tmRNA), required for stable association of tmRNA with ribosomes. tmRNA and SmpB together mimic tRNA shape, replacing the anticodon stem-loop with SmpB. tmRNA is encoded by the ssrA gene; the 2 termini fold to resemble tRNA(Ala) and it encodes a 'tag peptide', a short internal open reading frame. During trans-translation Ala-aminoacylated tmRNA acts like a tRNA, entering the A-site of stalled ribosomes, displacing the stalled mRNA. The ribosome then switches to translate the ORF on the tmRNA; the nascent peptide is terminated with the 'tag peptide' encoded by the tmRNA and targeted for degradation. The ribosome is freed to recommence translation, which seems to be the essential function of trans-translation. The sequence is that of SsrA-binding protein from Verminephrobacter eiseniae (strain EF01-2).